A 354-amino-acid chain; its full sequence is Homoserine O-succinyltransferase (354 aa).

The active-site Acyl-thioester intermediate is the Cys146. The substrate site is built by Lys167 and Ser196. Residue His239 is the Proton acceptor of the active site. Glu241 is an active-site residue. Residue Arg253 participates in substrate binding.

Belongs to the MetA family.

Its subcellular location is the cytoplasm. The enzyme catalyses L-homoserine + succinyl-CoA = O-succinyl-L-homoserine + CoA. Its pathway is amino-acid biosynthesis; L-methionine biosynthesis via de novo pathway; O-succinyl-L-homoserine from L-homoserine: step 1/1. Functionally, transfers a succinyl group from succinyl-CoA to L-homoserine, forming succinyl-L-homoserine. This is Homoserine O-succinyltransferase from Methylobacter tundripaludum (strain ATCC BAA-1195 / DSM 17260 / SV96).